A 91-amino-acid chain; its full sequence is Large ribosomal subunit protein uL23c (91 aa).

This sequence belongs to the universal ribosomal protein uL23 family. In terms of assembly, part of the 50S ribosomal subunit.

The protein localises to the plastid. It is found in the chloroplast. Its function is as follows. Binds to 23S rRNA. The chain is Large ribosomal subunit protein uL23c (rpl23) from Pinus koraiensis (Korean pine).